A 195-amino-acid polypeptide reads, in one-letter code: FMN-dependent NADH:quinone oxidoreductase (195 aa).

FMN is bound by residues Ser-9, 15-17, 85-88, and 129-132; these read SVS, MYNF, and SRGG.

Belongs to the azoreductase type 1 family. In terms of assembly, homodimer. It depends on FMN as a cofactor.

It carries out the reaction 2 a quinone + NADH + H(+) = 2 a 1,4-benzosemiquinone + NAD(+). It catalyses the reaction N,N-dimethyl-1,4-phenylenediamine + anthranilate + 2 NAD(+) = 2-(4-dimethylaminophenyl)diazenylbenzoate + 2 NADH + 2 H(+). Quinone reductase that provides resistance to thiol-specific stress caused by electrophilic quinones. Functionally, also exhibits azoreductase activity. Catalyzes the reductive cleavage of the azo bond in aromatic azo compounds to the corresponding amines. In Stenotrophomonas maltophilia (strain K279a), this protein is FMN-dependent NADH:quinone oxidoreductase.